A 434-amino-acid chain; its full sequence is Adenylosuccinate synthetase (434 aa).

Residues 22–28 (GDEGKGK) and 50–52 (GHT) contribute to the GTP site. Aspartate 23 functions as the Proton acceptor in the catalytic mechanism. Residues aspartate 23 and glycine 50 each contribute to the Mg(2+) site. IMP contacts are provided by residues 23–26 (DEGK), 48–51 (NAGH), threonine 139, arginine 153, glutamine 234, threonine 249, and arginine 313. Histidine 51 functions as the Proton donor in the catalytic mechanism. 309-315 (ATTGRKR) is a substrate binding site. Residues arginine 315, 341 to 343 (KLD), and 423 to 425 (SVG) contribute to the GTP site.

This sequence belongs to the adenylosuccinate synthetase family. Homodimer. It depends on Mg(2+) as a cofactor.

It localises to the cytoplasm. It catalyses the reaction IMP + L-aspartate + GTP = N(6)-(1,2-dicarboxyethyl)-AMP + GDP + phosphate + 2 H(+). It functions in the pathway purine metabolism; AMP biosynthesis via de novo pathway; AMP from IMP: step 1/2. Plays an important role in the de novo pathway of purine nucleotide biosynthesis. Catalyzes the first committed step in the biosynthesis of AMP from IMP. This is Adenylosuccinate synthetase from Chlorobium limicola (strain DSM 245 / NBRC 103803 / 6330).